The primary structure comprises 264 residues: Zinc transporter ZupT (264 aa).

The next 5 helical transmembrane spans lie at 8 to 28, 36 to 56, 75 to 95, 121 to 141, and 148 to 168; these read AFIL…IAFV, FLSV…MIEI, WLTV…DKLI, GLMT…ATFI, and SIAI…GIAV. Residues Asn132 and Glu135 each coordinate Fe(2+). Zn(2+) contacts are provided by Glu135 and His160. Fe(2+) is bound by residues Asn161, Glu164, and Glu193. Glu164 contacts Zn(2+). The next 3 membrane-spanning stretches (helical) occupy residues 197–217, 219–239, and 244–264; these read AIIG…GAIF, AVAG…AEEY, and LAIY…LLFI.

Belongs to the ZIP transporter (TC 2.A.5) family. ZupT subfamily.

It is found in the cell membrane. It carries out the reaction Zn(2+)(in) = Zn(2+)(out). In terms of biological role, mediates zinc uptake. May also transport other divalent cations. This is Zinc transporter ZupT from Streptococcus mutans serotype c (strain ATCC 700610 / UA159).